The following is a 913-amino-acid chain: Auxilin (913 aa).

Met1 is subject to N-acetylmethionine. 3 repeat units span residues 36–39 (NLKD), 40–43 (NLKD), and 44–47 (TLKD). Residues 36–47 (NLKDNLKDTLKD) form a 3 X 4 AA approximate tandem repeats region. Residues 55–222 (SVTSYTKGDL…GYMCDLLADK (168 aa)) form the Phosphatase tensin-type domain. Ser112 bears the Phosphoserine mark. The Phosphocysteine intermediate role is filled by Cys164. One can recognise a C2 tensin-type domain in the interval 228–366 (FKPLTIKSIT…FQVTLDVELQ (139 aa)). The SH3-binding signature appears at 409–417 (PIDIPPDNP). The interval 451 to 776 (QESEQSDDEL…GKGSSNLEGK (326 aa)) is disordered. Phosphoserine occurs at positions 453 and 456. Residues 506 to 523 (AMSNSFSPPAAPPTNSEL) show a composition bias toward polar residues. Low complexity predominate over residues 554-572 (ASTQSTPRRSATSTSASPT). Residues Ser563 and Ser570 each carry the phosphoserine modification. Residues 599–629 (FLNTSSASSDPFLQPTRSPSPTVHASSTPAV) show a composition bias toward polar residues. Residues 654-669 (SAATSPTGSSHGTPTH) show a composition bias toward low complexity. Residues 849 to 913 (TKWKPVGMAD…FENQGQKPLY (65 aa)) enclose the J domain.

As to quaternary structure, forms a complex composed of HSPA8, CLTC and DNAJC6. Interacts with HSPA8/HSC70 in an ATP-dependent manner; this interaction stimulates the HSPA8's ATPase activity. Interacts with CLTC; this interaction produces a local change in heavy-chain contacts, creating a detectable global distortion of the clathrin coat. Interacts with AP2A2. Interacts with DNM1(GTP-bound form); this interaction allows clathrin-coated vesicle (CCV) formation at the plasma membrane. Post-translationally, phosphorylation at Ser-570 modulates its ability to bind CLTC and therefore the synaptic vesicle endocytosis (SVE). In terms of processing, the N-terminus is blocked. Expressed in various brain regions, including cerebellum, corpus callosum, cortex, striatum, brainstem, pons, putamen, spinal cord and substantia nigra. Very low expression in non-neural tissues such as leukocytes, liver, adipose tissue, skeletal muscle and bone marrow.

It is found in the cytoplasmic vesicle. It localises to the clathrin-coated vesicle. Its function is as follows. May act as a protein phosphatase and/or a lipid phosphatase. Co-chaperone that recruits HSPA8/HSC70 to clathrin-coated vesicles (CCVs) and promotes the ATP-dependent dissociation of clathrin from CCVs and participates in clathrin-mediated endocytosis of synaptic vesicles and their recycling and also in intracellular trafficking. Firstly, binds tightly to the clathrin cages, at a ratio of one DNAJC6 per clathrin triskelion. The HSPA8:ATP complex then binds to the clathrin-auxilin cage, initially at a ratio of one HSPA8 per triskelion leading to ATP hydrolysis stimulation and causing a conformational change in the HSPA8. This cycle is repeated three times to drive to a complex containing the clathrin-auxilin cage associated to three HSPA8:ADP complex. The ATP hydrolysis of the third HSPA8:ATP complex leads to a concerted dismantling of the cage into component triskelia. Then, dissociates from the released triskelia and be recycled to initiate another cycle of HSPA8's recruitment. Also acts during the early steps of clathrin-coated vesicle (CCV) formation through its interaction with the GTP bound form of DNM1. The chain is Auxilin from Homo sapiens (Human).